The following is a 192-amino-acid chain: Xanthine phosphoribosyltransferase (192 aa).

2 residues coordinate xanthine: L20 and N27. A 5-phospho-alpha-D-ribose 1-diphosphate-binding site is contributed by 128–132 (ANGDA). Residue K156 participates in xanthine binding.

The protein belongs to the purine/pyrimidine phosphoribosyltransferase family. Xpt subfamily. Homodimer.

Its subcellular location is the cytoplasm. It catalyses the reaction XMP + diphosphate = xanthine + 5-phospho-alpha-D-ribose 1-diphosphate. It functions in the pathway purine metabolism; XMP biosynthesis via salvage pathway; XMP from xanthine: step 1/1. Its function is as follows. Converts the preformed base xanthine, a product of nucleic acid breakdown, to xanthosine 5'-monophosphate (XMP), so it can be reused for RNA or DNA synthesis. The chain is Xanthine phosphoribosyltransferase from Staphylococcus carnosus (strain TM300).